The sequence spans 246 residues: Pyridoxine 5'-phosphate synthase (246 aa).

Asn12 is a binding site for 3-amino-2-oxopropyl phosphate. 14 to 15 (DH) contacts 1-deoxy-D-xylulose 5-phosphate. Residue Arg23 coordinates 3-amino-2-oxopropyl phosphate. His48 functions as the Proton acceptor in the catalytic mechanism. The 1-deoxy-D-xylulose 5-phosphate site is built by Arg50 and His55. Residue Glu75 is the Proton acceptor of the active site. Thr105 contributes to the 1-deoxy-D-xylulose 5-phosphate binding site. His196 acts as the Proton donor in catalysis. 3-amino-2-oxopropyl phosphate contacts are provided by residues Gly197 and 218-219 (GH).

It belongs to the PNP synthase family. As to quaternary structure, homooctamer; tetramer of dimers.

It is found in the cytoplasm. The catalysed reaction is 3-amino-2-oxopropyl phosphate + 1-deoxy-D-xylulose 5-phosphate = pyridoxine 5'-phosphate + phosphate + 2 H2O + H(+). It functions in the pathway cofactor biosynthesis; pyridoxine 5'-phosphate biosynthesis; pyridoxine 5'-phosphate from D-erythrose 4-phosphate: step 5/5. Catalyzes the complicated ring closure reaction between the two acyclic compounds 1-deoxy-D-xylulose-5-phosphate (DXP) and 3-amino-2-oxopropyl phosphate (1-amino-acetone-3-phosphate or AAP) to form pyridoxine 5'-phosphate (PNP) and inorganic phosphate. This chain is Pyridoxine 5'-phosphate synthase, found in Pseudomonas savastanoi pv. phaseolicola (strain 1448A / Race 6) (Pseudomonas syringae pv. phaseolicola (strain 1448A / Race 6)).